The following is a 130-amino-acid chain: Con-Ins G2b (130 aa).

The first 23 residues, 1–23 (MTTSSYFLLVALGLLLYVRQSFS), serve as a signal peptide directing secretion. Disulfide bonds link cysteine 29-cysteine 100, cysteine 41-cysteine 103, cysteine 53-cysteine 116, and cysteine 102-cysteine 107. Proline 34 is modified (4-hydroxyproline; partial). The disordered stretch occupies residues 54–77 (EEEEARRGGTNDGGKKRRRASPLR). Positions 59–92 (RRGGTNDGGKKRRRASPLRKRRRFISMLKARAKR) are cleaved as a propeptide — c peptide. The segment covering 68 to 77 (KKRRRASPLR) has biased composition (basic residues). A 4-carboxyglutamate; partial modification is found at glutamate 111.

The protein belongs to the insulin family. Heterodimer of A and B chains; disulfide-linked. As to expression, expressed by the venom gland.

It localises to the secreted. Functionally, this venom insulin, from a fish-hunting cone snail, facilitates prey capture by rapidly inducing hypoglycemic shock. Intraperitoneal injection of this peptide into zebrafish lowers blood glucose with the same potency than human insulin. In vivo, when applied to water, this peptide reduces overall locomotor activity of zebrafish larvae, observed as a significant decrease in the percentage of time spent swimming and movement frequency. The chain is Con-Ins G2b from Conus geographus (Geography cone).